The primary structure comprises 59 residues: Small ribosomal subunit protein bS21 (59 aa).

Residues 39–59 form a disordered region; it reads ETPVEKYKRKQRLKNRTKRRR. Over residues 45-59 the composition is skewed to basic residues; it reads YKRKQRLKNRTKRRR.

It belongs to the bacterial ribosomal protein bS21 family.

In Prochlorococcus marinus (strain SARG / CCMP1375 / SS120), this protein is Small ribosomal subunit protein bS21.